A 198-amino-acid chain; its full sequence is Protein GrpE (198 aa).

The protein belongs to the GrpE family. As to quaternary structure, homodimer.

It is found in the cytoplasm. Participates actively in the response to hyperosmotic and heat shock by preventing the aggregation of stress-denatured proteins, in association with DnaK and GrpE. It is the nucleotide exchange factor for DnaK and may function as a thermosensor. Unfolded proteins bind initially to DnaJ; upon interaction with the DnaJ-bound protein, DnaK hydrolyzes its bound ATP, resulting in the formation of a stable complex. GrpE releases ADP from DnaK; ATP binding to DnaK triggers the release of the substrate protein, thus completing the reaction cycle. Several rounds of ATP-dependent interactions between DnaJ, DnaK and GrpE are required for fully efficient folding. This is Protein GrpE from Baumannia cicadellinicola subsp. Homalodisca coagulata.